Reading from the N-terminus, the 462-residue chain is MVAEDFEAVLKAKYPSKSHAKRVVDLIREKIPNANGILYLESRMTKLLEDNDEPEPFRQRRFFYYLTGCNLPDCYYIYDIQSSKSILFIPPIDPDSVIWSGLPLSIDEALQKYDVDDVKLTSELNATLAHLGQANPQSTAYAIANQVSDHVTFLEFEKKNFDALKEAIEVSRVVKDEFEVAMIRKANHVSDIAHRAVLEKAKTAVNEREFEAAFLERCVAHGAKEMAYHPIAASGRAAATLHYVTNESPLEGKLNLLMDAGAEWNNYAADITRTFPLSGKFSKESREIYEIVLKMQNDCIAVLKEGVLWDDVHLLAHKIAIDGLLSIGILKGDKDEILKGRTSAAFLPHGLGHYLGMDTHDTGGNANYEDKDKLFRYLRVRGNLPSGSVITVEPGIYFCNFIIAPYLEDPVHSKFIDSAVLDKYWDVGGVRIEDNILITKDGYENLTITPKEVDEIETLVSN.

Positions 259, 270, 393, and 433 each coordinate Mn(2+).

It belongs to the peptidase M24B family. It depends on Mn(2+) as a cofactor.

The catalysed reaction is Release of any N-terminal amino acid, including proline, that is linked to proline, even from a dipeptide or tripeptide.. In terms of biological role, catalyzes the removal of a penultimate prolyl residue from the N-termini of peptides. In Fusarium vanettenii (strain ATCC MYA-4622 / CBS 123669 / FGSC 9596 / NRRL 45880 / 77-13-4) (Fusarium solani subsp. pisi), this protein is Probable Xaa-Pro aminopeptidase NECHADRAFT_60613.